Reading from the N-terminus, the 121-residue chain is Large ribosomal subunit protein bL12 (121 aa).

This sequence belongs to the bacterial ribosomal protein bL12 family. As to quaternary structure, homodimer. Part of the ribosomal stalk of the 50S ribosomal subunit. Forms a multimeric L10(L12)X complex, where L10 forms an elongated spine to which 2 to 4 L12 dimers bind in a sequential fashion. Binds GTP-bound translation factors.

Functionally, forms part of the ribosomal stalk which helps the ribosome interact with GTP-bound translation factors. Is thus essential for accurate translation. The chain is Large ribosomal subunit protein bL12 from Leuconostoc mesenteroides subsp. mesenteroides (strain ATCC 8293 / DSM 20343 / BCRC 11652 / CCM 1803 / JCM 6124 / NCDO 523 / NBRC 100496 / NCIMB 8023 / NCTC 12954 / NRRL B-1118 / 37Y).